Reading from the N-terminus, the 163-residue chain is RRM-domain-containing protein ECU01_0840 (163 aa).

One can recognise an RRM domain in the interval 84-163 (CSVKLSNLPL…SLGLSAEIAR (80 aa)).

The chain is RRM-domain-containing protein ECU01_0840 from Encephalitozoon cuniculi (strain GB-M1) (Microsporidian parasite).